A 168-amino-acid polypeptide reads, in one-letter code: Crossover junction endodeoxyribonuclease RuvC (168 aa).

Catalysis depends on residues Asp10, Glu70, and Asp143. The Mg(2+) site is built by Asp10, Glu70, and Asp143.

The protein belongs to the RuvC family. Homodimer which binds Holliday junction (HJ) DNA. The HJ becomes 2-fold symmetrical on binding to RuvC with unstacked arms; it has a different conformation from HJ DNA in complex with RuvA. In the full resolvosome a probable DNA-RuvA(4)-RuvB(12)-RuvC(2) complex forms which resolves the HJ. Mg(2+) serves as cofactor.

It is found in the cytoplasm. It catalyses the reaction Endonucleolytic cleavage at a junction such as a reciprocal single-stranded crossover between two homologous DNA duplexes (Holliday junction).. Functionally, the RuvA-RuvB-RuvC complex processes Holliday junction (HJ) DNA during genetic recombination and DNA repair. Endonuclease that resolves HJ intermediates. Cleaves cruciform DNA by making single-stranded nicks across the HJ at symmetrical positions within the homologous arms, yielding a 5'-phosphate and a 3'-hydroxyl group; requires a central core of homology in the junction. The consensus cleavage sequence is 5'-(A/T)TT(C/G)-3'. Cleavage occurs on the 3'-side of the TT dinucleotide at the point of strand exchange. HJ branch migration catalyzed by RuvA-RuvB allows RuvC to scan DNA until it finds its consensus sequence, where it cleaves and resolves the cruciform DNA. In Thermotoga maritima (strain ATCC 43589 / DSM 3109 / JCM 10099 / NBRC 100826 / MSB8), this protein is Crossover junction endodeoxyribonuclease RuvC.